A 757-amino-acid polypeptide reads, in one-letter code: Polyribonucleotide nucleotidyltransferase (757 aa).

2 residues coordinate Mg(2+): aspartate 532 and aspartate 538. Residues 598–657 (PRVTAIKVPVDKIGEVIGPKGKMINSITEQTGANISIEDDGTVFVGATDGPSAQAAIDMI) form the KH domain. Residues 669–738 (GERFLGTVVK…NRGKISLIPV (70 aa)) enclose the S1 motif domain.

This sequence belongs to the polyribonucleotide nucleotidyltransferase family. Mg(2+) serves as cofactor.

It is found in the cytoplasm. The enzyme catalyses RNA(n+1) + phosphate = RNA(n) + a ribonucleoside 5'-diphosphate. In terms of biological role, involved in mRNA degradation. Catalyzes the phosphorolysis of single-stranded polyribonucleotides processively in the 3'- to 5'-direction. This Rhodococcus jostii (strain RHA1) protein is Polyribonucleotide nucleotidyltransferase.